The chain runs to 683 residues: Elongation factor G-like protein (683 aa).

Positions Gln-5 to Glu-267 constitute a tr-type G domain. GTP-binding positions include Gly-14–Ser-21, Asp-73–Phe-77, and Asn-127–Asp-130.

This sequence belongs to the TRAFAC class translation factor GTPase superfamily. Classic translation factor GTPase family. EF-G/EF-2 subfamily.

The sequence is that of Elongation factor G-like protein from Thermotoga maritima (strain ATCC 43589 / DSM 3109 / JCM 10099 / NBRC 100826 / MSB8).